Consider the following 335-residue polypeptide: Probable cytosolic iron-sulfur protein assembly protein Ciao1 (335 aa).

7 WD repeats span residues 12 to 51 (GHKG…WSTK), 57 to 96 (GHKR…FECN), 101 to 140 (GHEN…EFEC), 146 to 185 (SHTQ…NDWD), 192 to 231 (SHTS…NSAG), 250 to 289 (QHSR…KPDE), and 301 to 335 (AHDQ…KVTE).

The protein belongs to the WD repeat CIA1 family.

In terms of biological role, essential component of the cytosolic iron-sulfur (Fe/S) protein assembly machinery. Required for the maturation of extramitochondrial Fe/S proteins. This is Probable cytosolic iron-sulfur protein assembly protein Ciao1 from Drosophila yakuba (Fruit fly).